The chain runs to 288 residues: Probable syndecan (288 aa).

The first 26 residues, 1–26, serve as a signal peptide directing secretion; that stretch reads MILKLNFCLSTYSVLILLSLSTQAFA. The Extracellular segment spans residues 27–231; that stretch reads ANQAKTKVVP…ETLANGFYAA (205 aa). The interval 67–175 is disordered; sequence EVNGSGYPTD…NIHNDEDFFT (109 aa). Asn-69 carries an N-linked (GlcNAc...) asparagine glycan. Ser-71 and Ser-86 each carry an O-linked (Xyl...) (glycosaminoglycan) serine glycan. Residues 89-104 show a composition bias toward polar residues; it reads PPSSATTKSDKVTSPS. Over residues 106–124 the composition is skewed to low complexity; it reads AVVTAKPTTVPTTTASFKP. The segment covering 141–164 has biased composition (acidic residues); the sequence is VEEDEDDDEDEDEDDEDDEEDFAD. Residue Ser-214 is glycosylated (O-linked (Xyl...) (glycosaminoglycan) serine). Residues 232-252 form a helical membrane-spanning segment; sequence IAGGVLVAVITAILLVLFVVF. The Cytoplasmic portion of the chain corresponds to 253–288; sequence RIRKKDEGSYALDEPKQARPYASYGYTKASTKEFYA.

This sequence belongs to the syndecan proteoglycan family.

Its subcellular location is the membrane. The protein localises to the cell surface. It is found in the cell junction. It localises to the cytoplasm. Cell surface proteoglycan that bears heparan sulfate. Required for correct mitotic spindle orientation of the ABar blastomere division plane and this may be through modulation of astral microtubule array, and in association with the wnt-signaling proteins mig-5 and dsh-2. Involved in the migration of AQR and PQR neurons, which descend from the Q neuroblasts. Promotes the axon guidance of D-type motor neurons. This Caenorhabditis elegans protein is Probable syndecan.